We begin with the raw amino-acid sequence, 98 residues long: Protein S100-A13 (98 aa).

Positions 18-53 (TTFFTFAGREGRKGSLSVNEFKELVTQQLPHLLKDV) constitute an EF-hand domain. Ca(2+) contacts are provided by serine 32, glutamate 37, aspartate 64, asparagine 66, aspartate 68, glutamate 70, and glutamate 75. The residue at position 32 (serine 32) is a Phosphoserine.

The protein belongs to the S-100 family. As to quaternary structure, homodimer. Part of a copper-dependent multiprotein complex containing S100A13, FGF1 and SYT1. Interacts with FGF1 and SYT1. Interacts with IL1A.

The protein resides in the cytoplasm. It is found in the secreted. In terms of biological role, plays a role in the export of proteins that lack a signal peptide and are secreted by an alternative pathway. Binds two calcium ions per subunit. Binds one copper ion. Binding of one copper ion does not interfere with calcium binding. Required for the copper-dependent stress-induced export of IL1A and FGF1. The calcium-free protein binds to lipid vesicles containing phosphatidylserine, but not to vesicles containing phosphatidylcholine. The protein is Protein S100-A13 (S100A13) of Bos taurus (Bovine).